The sequence spans 114 residues: Large ribosomal subunit protein uL22c (114 aa).

Belongs to the universal ribosomal protein uL22 family. In terms of assembly, part of the 50S ribosomal subunit.

Its subcellular location is the plastid. The protein resides in the chloroplast. Functionally, this protein binds specifically to 23S rRNA. In terms of biological role, the globular domain of the protein is located near the polypeptide exit tunnel on the outside of the subunit, while an extended beta-hairpin is found that lines the wall of the exit tunnel in the center of the 70S ribosome. The chain is Large ribosomal subunit protein uL22c (rpl22) from Gracilaria tenuistipitata (Red alga).